The following is a 435-amino-acid chain: Ornithine decarboxylase (435 aa).

N6-(pyridoxal phosphate)lysine is present on lysine 98. Pyridoxal 5'-phosphate-binding positions include serine 230, glycine 268, and 301–304; that span reads EPGR. A substrate-binding site is contributed by 344-345; the sequence is YD. Catalysis depends on cysteine 380, which acts as the Proton donor; shared with dimeric partner. Residue aspartate 381 participates in substrate binding. Tyrosine 409 is a binding site for pyridoxal 5'-phosphate.

Belongs to the Orn/Lys/Arg decarboxylase class-II family. Homodimer. Only the dimer is catalytically active, as the active sites are constructed of residues from both monomers. It depends on pyridoxal 5'-phosphate as a cofactor.

The catalysed reaction is L-ornithine + H(+) = putrescine + CO2. It functions in the pathway amine and polyamine biosynthesis; putrescine biosynthesis via L-ornithine pathway; putrescine from L-ornithine: step 1/1. Its activity is regulated as follows. Inhibited by antizyme (AZ) in response to polyamine levels. AZ inhibits the assembly of the functional homodimer by binding to ODC monomers and targeting them for ubiquitin-independent proteolytic destruction by the 26S proteasome. Functionally, catalyzes the first and rate-limiting step of polyamine biosynthesis that converts ornithine into putrescine, which is the precursor for the polyamines, spermidine and spermine. Polyamines are essential for cell proliferation and are implicated in cellular processes, ranging from DNA replication to apoptosis. The sequence is that of Ornithine decarboxylase (ODC) from Capsicum annuum (Capsicum pepper).